Reading from the N-terminus, the 372-residue chain is Invasion protein InvE (372 aa).

Over residues 1-19 (MIPGSTSGISFSRILSRQA) the composition is skewed to polar residues. The interval 1–47 (MIPGSTSGISFSRILSRQASHQDATQHTDAQQAEIQQAAEDSSPGAE) is disordered. A compositionally biased stretch (low complexity) spans 21–40 (HQDATQHTDAQQAEIQQAAE).

Its subcellular location is the cell membrane. Its function is as follows. Involved in the triggering of intracellular events that lead to microbial internalization. These events include increase in calcium level, redistribution of actin microfilaments, and changes in the normal structure of the microvilli. Encoded within the type III secretion system (SPI-1 T3SS), it is essential for the translocation of protein effectors into host cells. Forms a complex with SipB and SipC in the presence of their chaperone SicA. This chain is Invasion protein InvE (invE), found in Salmonella typhi.